Consider the following 186-residue polypeptide: Photosystem I assembly protein Ycf4 (186 aa).

The next 2 membrane-spanning stretches (helical) occupy residues 22 to 42 (FCWAFILFLGSLGFLLVGTSS) and 57 to 77 (IIFFPQGIVMSFYGIAGLFIS).

This sequence belongs to the Ycf4 family.

It localises to the plastid. It is found in the chloroplast thylakoid membrane. Functionally, seems to be required for the assembly of the photosystem I complex. The sequence is that of Photosystem I assembly protein Ycf4 from Vitis vinifera (Grape).